A 163-amino-acid chain; its full sequence is NADH-quinone oxidoreductase subunit I (163 aa).

4Fe-4S ferredoxin-type domains lie at 53 to 83 (LRRYPNGEERCIACKLCEAICPAQAITIEAG) and 94 to 123 (VRYDIDMVKCIYCGFCQEACPVEAIVEGPN). 8 residues coordinate [4Fe-4S] cluster: Cys-63, Cys-66, Cys-69, Cys-73, Cys-103, Cys-106, Cys-109, and Cys-113.

Belongs to the complex I 23 kDa subunit family. As to quaternary structure, NDH-1 is composed of 14 different subunits. Subunits NuoA, H, J, K, L, M, N constitute the membrane sector of the complex. Requires [4Fe-4S] cluster as cofactor.

It localises to the cell inner membrane. The enzyme catalyses a quinone + NADH + 5 H(+)(in) = a quinol + NAD(+) + 4 H(+)(out). Its function is as follows. NDH-1 shuttles electrons from NADH, via FMN and iron-sulfur (Fe-S) centers, to quinones in the respiratory chain. The immediate electron acceptor for the enzyme in this species is believed to be ubiquinone. Couples the redox reaction to proton translocation (for every two electrons transferred, four hydrogen ions are translocated across the cytoplasmic membrane), and thus conserves the redox energy in a proton gradient. This Bartonella bacilliformis (strain ATCC 35685 / KC583 / Herrer 020/F12,63) protein is NADH-quinone oxidoreductase subunit I.